The sequence spans 318 residues: Nitrate reductase [NADH] (318 aa).

In terms of domain architecture, Cytochrome b5 heme-binding spans 216 to 291 (AKSFTMAEVE…LLEYYIGELA (76 aa)). Heme is bound by residues histidine 251 and histidine 274.

It belongs to the nitrate reductase family. Homodimer. FAD is required as a cofactor. Requires heme as cofactor. The cofactor is Mo-molybdopterin.

It carries out the reaction nitrite + NAD(+) + H2O = nitrate + NADH + H(+). Nitrate reductase is a key enzyme involved in the first step of nitrate assimilation in plants, fungi and bacteria. This Chlorella vulgaris (Green alga) protein is Nitrate reductase [NADH].